The sequence spans 345 residues: Holliday junction branch migration complex subunit RuvB (345 aa).

Residues 4-185 form a large ATPase domain (RuvB-L) region; that stretch reads TDRLIAPSTQ…FGIVSRLEFY (182 aa). ATP-binding positions include L24, R25, G66, K69, T70, T71, 132–134, R175, Y185, and R222; that span reads EDY. T70 serves as a coordination point for Mg(2+). Positions 186–256 are small ATPAse domain (RuvB-S); that stretch reads TADELARIVH…IADAALKMLD (71 aa). The head domain (RuvB-H) stretch occupies residues 259-345; the sequence is KLGFDVMDRK…KIGTGELWQQ (87 aa). DNA-binding residues include R295, R314, and R319.

It belongs to the RuvB family. In terms of assembly, homohexamer. Forms an RuvA(8)-RuvB(12)-Holliday junction (HJ) complex. HJ DNA is sandwiched between 2 RuvA tetramers; dsDNA enters through RuvA and exits via RuvB. An RuvB hexamer assembles on each DNA strand where it exits the tetramer. Each RuvB hexamer is contacted by two RuvA subunits (via domain III) on 2 adjacent RuvB subunits; this complex drives branch migration. In the full resolvosome a probable DNA-RuvA(4)-RuvB(12)-RuvC(2) complex forms which resolves the HJ.

Its subcellular location is the cytoplasm. The catalysed reaction is ATP + H2O = ADP + phosphate + H(+). Its function is as follows. The RuvA-RuvB-RuvC complex processes Holliday junction (HJ) DNA during genetic recombination and DNA repair, while the RuvA-RuvB complex plays an important role in the rescue of blocked DNA replication forks via replication fork reversal (RFR). RuvA specifically binds to HJ cruciform DNA, conferring on it an open structure. The RuvB hexamer acts as an ATP-dependent pump, pulling dsDNA into and through the RuvAB complex. RuvB forms 2 homohexamers on either side of HJ DNA bound by 1 or 2 RuvA tetramers; 4 subunits per hexamer contact DNA at a time. Coordinated motions by a converter formed by DNA-disengaged RuvB subunits stimulates ATP hydrolysis and nucleotide exchange. Immobilization of the converter enables RuvB to convert the ATP-contained energy into a lever motion, pulling 2 nucleotides of DNA out of the RuvA tetramer per ATP hydrolyzed, thus driving DNA branch migration. The RuvB motors rotate together with the DNA substrate, which together with the progressing nucleotide cycle form the mechanistic basis for DNA recombination by continuous HJ branch migration. Branch migration allows RuvC to scan DNA until it finds its consensus sequence, where it cleaves and resolves cruciform DNA. This chain is Holliday junction branch migration complex subunit RuvB, found in Methylobacillus flagellatus (strain ATCC 51484 / DSM 6875 / VKM B-1610 / KT).